Here is a 268-residue protein sequence, read N- to C-terminus: Phosphatidylglycerol--prolipoprotein diacylglyceryl transferase (268 aa).

4 consecutive transmembrane segments (helical) span residues 14–34 (LGPI…FAGW), 57–77 (LTFY…IIFY), 90–110 (FFLW…LIAF), and 117–137 (IGAN…IGLG). Residue Arg-140 coordinates a 1,2-diacyl-sn-glycero-3-phospho-(1'-sn-glycerol). Helical transmembrane passes span 174 to 194 (QLFE…LVTI), 200 to 220 (YLVL…CEFF), and 238 to 258 (GQIL…AVFI).

It belongs to the Lgt family.

The protein resides in the cell inner membrane. The enzyme catalyses L-cysteinyl-[prolipoprotein] + a 1,2-diacyl-sn-glycero-3-phospho-(1'-sn-glycerol) = an S-1,2-diacyl-sn-glyceryl-L-cysteinyl-[prolipoprotein] + sn-glycerol 1-phosphate + H(+). It participates in protein modification; lipoprotein biosynthesis (diacylglyceryl transfer). Functionally, catalyzes the transfer of the diacylglyceryl group from phosphatidylglycerol to the sulfhydryl group of the N-terminal cysteine of a prolipoprotein, the first step in the formation of mature lipoproteins. This is Phosphatidylglycerol--prolipoprotein diacylglyceryl transferase from Francisella tularensis subsp. novicida (strain U112).